The sequence spans 108 residues: Zinc metalloproteinase/disintegrin (108 aa).

In terms of domain architecture, Peptidase M12B spans 1 to 19; sequence NEYQTYLTDRNPQCILNEP. Positions 20-35 are excised as a propeptide; sequence LRTDTVSTPVSGNELL. The 82-residue stretch at 27 to 108 folds into the Disintegrin domain; the sequence is TPVSGNELLE…ADCPRNGFYG (82 aa). Intrachain disulfides connect C41–C56, C43–C51, C50–C73, C64–C70, C69–C94, and C82–C101. Positions 86–88 match the Cell attachment site; atypical (KGD) motif; that stretch reads KGD.

This sequence belongs to the venom metalloproteinase (M12B) family. P-II subfamily. P-IIa sub-subfamily. As to quaternary structure, monomeric (disintegrin). It depends on Zn(2+) as a cofactor. Expressed by the venom gland.

It localises to the secreted. Functionally, impairs hemostasis in the envenomed animal. In terms of biological role, inhibits platelet aggregation induced by ADP, thrombin, platelet-activating factor and collagen. Acts by inhibiting fibrinogen interaction with platelet receptors GPIIb/GPIIIa (ITGA2B/ITGB3). The chain is Zinc metalloproteinase/disintegrin from Gloydius brevicauda (Korean slamosa snake).